The sequence spans 324 residues: HTH-type transcriptional regulator CysB (324 aa).

One can recognise an HTH lysR-type domain in the interval 1-59 (MKLQQLRYIVEVVNHNLNVSSTAEGLYTSQPGISKQVRMLEDELGIQIFARSGKHLTQV). A DNA-binding region (H-T-H motif) is located at residues 19-38 (VSSTAEGLYTSQPGISKQVR).

Belongs to the LysR transcriptional regulatory family. As to quaternary structure, homotetramer.

It localises to the cytoplasm. In terms of biological role, this protein is a positive regulator of gene expression for the cysteine regulon. The inducer for CysB is N-acetylserine. Thiosulfate and sulfide act as anti-inducers. This is HTH-type transcriptional regulator CysB (cysB) from Klebsiella pneumoniae.